The following is a 302-amino-acid chain: Nucleoside kinase (302 aa).

The substrate site is built by D17, Q33, G43, and N47. Position 109 (Q109) interacts with ATP. Residues T111–F113 and Q163 contribute to the substrate site. ATP is bound by residues N186 and T214–G219. Position 247 (D247) interacts with substrate. D247 (proton acceptor) is an active-site residue.

Homodimer. The cofactor is Mg(2+). Mn(2+) serves as cofactor.

The enzyme catalyses cytidine + ATP = CMP + ADP + H(+). It catalyses the reaction guanosine + ATP = GMP + ADP + H(+). The catalysed reaction is inosine + ATP = IMP + ADP + H(+). Catalyzes the phosphorylation of a wide range of nucleosides to yield nucleoside monophosphates. Shows the highest activity for inosine, guanosine and cytidine, but very poor kinase activity with adenosine, thymidine, uridine and xanthosine. ATP is the best phosphate donor, but can also use ITP and GTP. Shows extremely low activity with fructose-6-phosphate. The chain is Nucleoside kinase from Methanocaldococcus jannaschii (strain ATCC 43067 / DSM 2661 / JAL-1 / JCM 10045 / NBRC 100440) (Methanococcus jannaschii).